A 253-amino-acid polypeptide reads, in one-letter code: Kallikrein-7 (253 aa).

The first 22 residues, 1–22 (MARSLLLPLQILLLSLALETAG), serve as a signal peptide directing secretion. Residues 23–29 (EEAQGDK) constitute a propeptide, activation peptide. In terms of domain architecture, Peptidase S1 spans 30 to 250 (IIDGAPCARG…FTKWINDTMK (221 aa)). 6 disulfide bridges follow: C36–C165, C55–C71, C137–C239, C144–C211, C176–C190, and C201–C226. Active-site charge relay system residues include H70 and D112. S205 serves as the catalytic Charge relay system. N246 carries an N-linked (GlcNAc...) asparagine glycan.

This sequence belongs to the peptidase S1 family. Kallikrein subfamily. Abundantly expressed in the skin and is expressed by keratinocytes in the epidermis. Also expressed in the brain, mammary gland, cerebellum, spinal cord and kidney. Lower levels in salivary glands, uterus, thymus, thyroid, placenta, trachea and testis. Up-regulated in ovarian carcinoma, especially late-stage serous carcinoma, compared with normal ovaries and benign adenomas (at protein level).

It is found in the secreted. It catalyses the reaction Cleavage of proteins with aromatic side chains in the P1 position.. Its activity is regulated as follows. Inhibited by Zn2+ and Cu2+ at low micromolar concentrations. Inhibited by SERPINA12. In terms of biological role, may catalyze the degradation of intercellular cohesive structures in the cornified layer of the skin in the continuous shedding of cells from the skin surface. Specific for amino acid residues with aromatic side chains in the P1 position. Cleaves insulin A chain at '14-Tyr-|-Gln-15' and insulin B chain at '6-Leu-|-Cys-7', '16-Tyr-|-Leu-17', '25-Phe-|-Tyr-26' and '26-Tyr-|-Thr-27'. Could play a role in the activation of precursors to inflammatory cytokines. The protein is Kallikrein-7 (KLK7) of Homo sapiens (Human).